Here is a 149-residue protein sequence, read N- to C-terminus: FAD synthase (149 aa).

ATP-binding positions include valine 15–phenylalanine 16, histidine 20–histidine 23, and aspartate 101.

This sequence belongs to the archaeal FAD synthase family. Homodimer. A divalent metal cation serves as cofactor.

The catalysed reaction is FMN + ATP + H(+) = FAD + diphosphate. The protein operates within cofactor biosynthesis; FAD biosynthesis; FAD from FMN: step 1/1. In terms of biological role, catalyzes the transfer of the AMP portion of ATP to flavin mononucleotide (FMN) to produce flavin adenine dinucleotide (FAD) coenzyme. The polypeptide is FAD synthase (Thermococcus kodakarensis (strain ATCC BAA-918 / JCM 12380 / KOD1) (Pyrococcus kodakaraensis (strain KOD1))).